Reading from the N-terminus, the 49-residue chain is Large ribosomal subunit protein bL33A (49 aa).

This sequence belongs to the bacterial ribosomal protein bL33 family.

This Staphylococcus aureus (strain COL) protein is Large ribosomal subunit protein bL33A.